The following is a 248-amino-acid chain: Tryptophan synthase alpha chain (248 aa).

Active-site proton acceptor residues include E36 and D47.

Belongs to the TrpA family. As to quaternary structure, tetramer of two alpha and two beta chains.

The enzyme catalyses (1S,2R)-1-C-(indol-3-yl)glycerol 3-phosphate + L-serine = D-glyceraldehyde 3-phosphate + L-tryptophan + H2O. The protein operates within amino-acid biosynthesis; L-tryptophan biosynthesis; L-tryptophan from chorismate: step 5/5. Functionally, the alpha subunit is responsible for the aldol cleavage of indoleglycerol phosphate to indole and glyceraldehyde 3-phosphate. The sequence is that of Tryptophan synthase alpha chain from Pyrococcus abyssi (strain GE5 / Orsay).